Here is a 353-residue protein sequence, read N- to C-terminus: S-adenosylmethionine:tRNA ribosyltransferase-isomerase (353 aa).

It belongs to the QueA family. Monomer.

Its subcellular location is the cytoplasm. It carries out the reaction 7-aminomethyl-7-carbaguanosine(34) in tRNA + S-adenosyl-L-methionine = epoxyqueuosine(34) in tRNA + adenine + L-methionine + 2 H(+). It participates in tRNA modification; tRNA-queuosine biosynthesis. In terms of biological role, transfers and isomerizes the ribose moiety from AdoMet to the 7-aminomethyl group of 7-deazaguanine (preQ1-tRNA) to give epoxyqueuosine (oQ-tRNA). The polypeptide is S-adenosylmethionine:tRNA ribosyltransferase-isomerase (Marinomonas sp. (strain MWYL1)).